A 146-amino-acid chain; its full sequence is Cytochrome c oxidase assembly factor 1 homolog (146 aa).

Over 1-14 (MMWQKYAGSRRSMP) the chain is Mitochondrial matrix. The helical transmembrane segment at 15-37 (LGARILFHGVFYAGGFAIVYYLI) threads the bilayer. At 38–146 (QKFHSRALYY…GENGDEVKKE (109 aa)) the chain is on the mitochondrial intermembrane side.

Belongs to the COA1 family. As to quaternary structure, component of the MITRAC (mitochondrial translation regulation assembly intermediate of cytochrome c oxidase complex) complex, the core components of this complex being COA3/MITRAC12 and COX14. Interacts with COX17 and COA6. Part of the mitochondrial complex I assembly/MCIA complex that comprises at least the core subunits TMEM126B, NDUFAF1, ECSIT and ACAD9 and complement subunits such as COA1 and TMEM186.

It localises to the mitochondrion inner membrane. Its function is as follows. Component of the MITRAC (mitochondrial translation regulation assembly intermediate of cytochrome c oxidase complex) complex, that regulates cytochrome c oxidase assembly. MITRAC complexes regulate both translation of mitochondrial encoded components and assembly of nuclear-encoded components imported in mitochondrion. Required for assembly of mitochondrial respiratory chain complex I and complex IV. As part of the MCIA complex, required for efficient assembly of the mitochondrial complex I. This chain is Cytochrome c oxidase assembly factor 1 homolog, found in Homo sapiens (Human).